Here is a 482-residue protein sequence, read N- to C-terminus: 7-deoxyloganetic acid glucosyltransferase (482 aa).

Histidine 22 serves as the catalytic Proton acceptor. Residue histidine 22 participates in an anthocyanidin binding. Aspartate 127 acts as the Charge relay in catalysis. The UDP-alpha-D-glucose site is built by threonine 149, alanine 362, glutamine 364, histidine 379, tryptophan 382, asparagine 383, serine 384, and glutamate 387. An anthocyanidin is bound at residue alanine 402. Residues aspartate 403 and glutamine 404 each contribute to the UDP-alpha-D-glucose site.

It belongs to the UDP-glycosyltransferase family. As to expression, expressed in leaves, roots and stems. Lower levels of expression in flowers. Preferentially expressed in internal phloem parenchyma cells.

It catalyses the reaction 7-deoxyloganetate + UDP-alpha-D-glucose = 7-deoxyloganate + UDP + H(+). Its function is as follows. Iridoid glucosyltransferase acting exclusively on 7-deoxyloganetic acid. No activity with 7-deoxyloganetin. Catalyzes the fourth to last step in secologanin biosynthesis. In Catharanthus roseus (Madagascar periwinkle), this protein is 7-deoxyloganetic acid glucosyltransferase (UGT709C2).